We begin with the raw amino-acid sequence, 373 residues long: Anhydro-N-acetylmuramic acid kinase (373 aa).

Residue 12-19 (GTSLDGVD) coordinates ATP.

The protein belongs to the anhydro-N-acetylmuramic acid kinase family.

It carries out the reaction 1,6-anhydro-N-acetyl-beta-muramate + ATP + H2O = N-acetyl-D-muramate 6-phosphate + ADP + H(+). The protein operates within amino-sugar metabolism; 1,6-anhydro-N-acetylmuramate degradation. Its pathway is cell wall biogenesis; peptidoglycan recycling. Its function is as follows. Catalyzes the specific phosphorylation of 1,6-anhydro-N-acetylmuramic acid (anhMurNAc) with the simultaneous cleavage of the 1,6-anhydro ring, generating MurNAc-6-P. Is required for the utilization of anhMurNAc either imported from the medium or derived from its own cell wall murein, and thus plays a role in cell wall recycling. The protein is Anhydro-N-acetylmuramic acid kinase of Salmonella paratyphi A (strain ATCC 9150 / SARB42).